The chain runs to 133 residues: Interleukin-4 (133 aa).

The signal sequence occupies residues 1–24 (MGLTSQLIPTLVCLLVCTSNFAHG). 3 disulfide bridges follow: cysteine 27–cysteine 133, cysteine 48–cysteine 85, and cysteine 70–cysteine 105. N-linked (GlcNAc...) asparagine glycans are attached at residues asparagine 62, asparagine 96, asparagine 102, and asparagine 108.

The protein belongs to the IL-4/IL-13 family.

Its subcellular location is the secreted. Its function is as follows. Participates in at least several B-cell activation processes as well as of other cell types. It is a costimulator of DNA-synthesis. It induces the expression of class II MHC molecules on resting B-cells. It enhances both secretion and cell surface expression of IgE and IgG1. It also regulates the expression of the low affinity Fc receptor for IgE (CD23) on both lymphocytes and monocytes. Positively regulates IL31RA expression in macrophages. Stimulates autophagy in dendritic cells by interfering with mTORC1 signaling and through the induction of RUFY4. The polypeptide is Interleukin-4 (IL4) (Lama glama (Llama)).